A 342-amino-acid polypeptide reads, in one-letter code: Alpha-(1,3)-fucosyltransferase 7 (342 aa).

At M1–G14 the chain is on the cytoplasmic side. The chain crosses the membrane as a helical; Signal-anchor for type II membrane protein span at residues L15 to A36. Over P37–A342 the chain is Lumenal. A disulfide bond links C68 and C76. N81 carries an N-linked (GlcNAc...) asparagine glycan. The cysteines at positions 211 and 214 are disulfide-linked. N-linked (GlcNAc...) asparagine glycosylation is present at N291. The cysteines at positions 318 and 321 are disulfide-linked.

Belongs to the glycosyltransferase 10 family. Post-translationally, N-glycosylated. Leukocytic/myeloid lineage cells.

It is found in the golgi apparatus. The protein localises to the golgi stack membrane. It carries out the reaction an N-acetyl-alpha-neuraminyl-(2-&gt;3)-beta-D-galactosyl-(1-&gt;4)-N-acetyl-beta-D-glucosaminyl derivative + GDP-beta-L-fucose = an alpha-Neu5Ac-(2-&gt;3)-beta-D-Gal-(1-&gt;4)-[alpha-L-Fuc-(1-&gt;3)]-beta-D-GlcNAc derivative + GDP + H(+). It catalyses the reaction a neolactoside IV(3)-alpha-NeuAc-nLc4Cer + GDP-beta-L-fucose = a neolactoside IV(3)-alpha-NeuNAc,III(3)-alpha-Fuc-nLc4Cer + GDP + H(+). The catalysed reaction is a neolactoside VI(3)-alpha-NeuNAc-nLc6Cer + GDP-beta-L-fucose = a neolactoside VI(3)-alpha-NeuAc,V(3)-alphaFuc-nLc6Cer + GDP + H(+). The enzyme catalyses an alpha-Neu5Ac-(2-&gt;3)-beta-D-Gal-(1-&gt;4)-beta-D-GlcNAc-(1-&gt;3)-beta-D-Gal-(1-&gt;4)-[alpha-L-Fuc-(1-&gt;3)]-beta-D-GlcNAc derivative + GDP-beta-L-fucose = an alpha-Neu5Ac-(2-&gt;3)-beta-D-Gal-(1-&gt;4)-[alpha-L-Fuc-(1-&gt;3)]-beta-D-GlcNAc-(1-&gt;3)-beta-D-Gal-(1-&gt;4)-[alpha-L-Fuc-(1-&gt;3)]-beta-D-GlcNAc derivative + GDP + H(+). It carries out the reaction an alpha-Neu5Ac-(2-&gt;3)-beta-D-Gal-(1-&gt;4)-beta-D-GlcNAc6S derivative + GDP-beta-L-fucose = an alpha-Neu5Ac-(2-&gt;3)-beta-D-Gal-(1-&gt;4)-[alpha-L-Fuc-(1-&gt;3)]-beta-D-GlcNAc6S derivative + GDP + H(+). It catalyses the reaction alpha-Neu5Ac-(2-&gt;3)-beta-D-Gal-(1-&gt;4)-beta-D-GlcNAc-(1-&gt;3)-beta-D-Gal-(1-&gt;4)-D-Glc + GDP-beta-L-fucose = alpha-Neu5Ac-(2-&gt;3)-beta-D-Gal-(1-&gt;4)-[alpha-L-Fuc-(1-&gt;3)]-beta-D-GlcNAc-(1-&gt;3)-beta-D-Gal-(1-&gt;4)-D-Glc + GDP + H(+). The catalysed reaction is alpha-Neu5Ac-(2-&gt;3)-beta-D-Gal-(1-&gt;4)-beta-D-GlcNAc-(1-&gt;3)-beta-D-Gal-(1-&gt;4)-[alpha-L-Fuc-(1-&gt;3)]-beta-D-GlcNAc-(1-&gt;3)-beta-D-Gal-(1-&gt;4)-beta-D-GlcNAc + GDP-beta-L-fucose = alpha-Neu5Ac-(2-&gt;3)-beta-D-Gal-(1-&gt;4)-[alpha-L-Fuc-(1-&gt;3)]-beta-D-GlcNAc-(1-&gt;3)-beta-D-Gal-(1-&gt;4)-[alpha-L-Fuc-(1-&gt;3)]-beta-D-GlcNAc-(1-&gt;3)-beta-D-Gal-(1-&gt;4)-beta-D-GlcNAc + GDP + H(+). The enzyme catalyses alpha-Neu5Ac-(2-&gt;3)-beta-D-Gal-(1-&gt;4)-beta-D-GlcNAc-(1-&gt;3)-beta-D-Gal-(1-&gt;4)-beta-D-GlcNAc-(1-&gt;3)-beta-D-Gal-(1-&gt;4)-beta-D-GlcNAc + GDP-beta-L-fucose = alpha-Neu5Ac-(2-&gt;3)-beta-D-Gal-(1-&gt;4)-[alpha-L-Fuc-(1-&gt;3)]-beta-D-GlcNAc-(1-&gt;3)-beta-D-Gal-(1-&gt;4)-beta-D-GlcNAc-(1-&gt;3)-beta-D-Gal-(1-&gt;4)-beta-D-GlcNAc + GDP + H(+). Its pathway is protein modification; protein glycosylation. Its activity is regulated as follows. Inhibited by NaCl. Inhibited by GDP in a concentration dependent manner, with an IC(50) value of 93 uM. Also inhibited by GMP and GTP. Inhibited by N-ethylmaleimide. Activated by poly(ethylene glycol) by enhancing the thermal stability of FUT7. Activated by Mn2+, Ca2+, and Mg2+. Both panosialin A and B inhibit activity with IC(50) values of 4.8 and 5.3 ug/ml, respectively. Inhibited by gallic acid (GA) and (-)-epigallocatechin gallate (EGCG) in a time-dependent and irreversible manner with IC(50) values of 60 and 700 nM, respectively. Catalyzes the transfer of L-fucose, from a guanosine diphosphate-beta-L-fucose, to the N-acetyl glucosamine (GlcNAc) of a distal alpha2,3 sialylated lactosamine unit of a glycoprotein or a glycolipid-linked sialopolylactosamines chain through an alpha-1,3 glycosidic linkage and participates in the final fucosylation step in the biosynthesis of the sialyl Lewis X (sLe(x)), a carbohydrate involved in cell and matrix adhesion during leukocyte trafficking and fertilization. In vitro, also synthesizes sialyl-dimeric-Lex structures, from VIM-2 structures and both di-fucosylated and trifucosylated structures from mono-fucosylated precursors. However does not catalyze alpha 1-3 fucosylation when an internal alpha 1-3 fucosylation is present in polylactosamine chain and the fucosylation rate of the internal GlcNAc residues is reduced once fucose has been added to the distal GlcNAc. Also catalyzes the transfer of a fucose from GDP-beta-fucose to the 6-sulfated a(2,3)sialylated substrate to produce 6-sulfo sLex mediating significant L-selectin-dependent cell adhesion. Through sialyl-Lewis(x) biosynthesis, can control SELE- and SELP-mediated cell adhesion with leukocytes and allows leukocytes tethering and rolling along the endothelial tissue thereby enabling the leukocytes to accumulate at a site of inflammation. May enhance embryo implantation through sialyl Lewis X (sLeX)-mediated adhesion of embryo cells to endometrium. May affect insulin signaling by up-regulating the phosphorylation and expression of some signaling molecules involved in the insulin-signaling pathway through SLe(x) which is present on the glycans of the INSRR alpha subunit. The sequence is that of Alpha-(1,3)-fucosyltransferase 7 from Homo sapiens (Human).